We begin with the raw amino-acid sequence, 250 residues long: Ubiquinone/menaquinone biosynthesis C-methyltransferase UbiE (250 aa).

Residues Thr73, Asp94, 122–123, and Ser139 contribute to the S-adenosyl-L-methionine site; that span reads NA.

It belongs to the class I-like SAM-binding methyltransferase superfamily. MenG/UbiE family.

The enzyme catalyses a 2-demethylmenaquinol + S-adenosyl-L-methionine = a menaquinol + S-adenosyl-L-homocysteine + H(+). It catalyses the reaction a 2-methoxy-6-(all-trans-polyprenyl)benzene-1,4-diol + S-adenosyl-L-methionine = a 5-methoxy-2-methyl-3-(all-trans-polyprenyl)benzene-1,4-diol + S-adenosyl-L-homocysteine + H(+). The protein operates within quinol/quinone metabolism; menaquinone biosynthesis; menaquinol from 1,4-dihydroxy-2-naphthoate: step 2/2. It functions in the pathway cofactor biosynthesis; ubiquinone biosynthesis. In terms of biological role, methyltransferase required for the conversion of demethylmenaquinol (DMKH2) to menaquinol (MKH2) and the conversion of 2-polyprenyl-6-methoxy-1,4-benzoquinol (DDMQH2) to 2-polyprenyl-3-methyl-6-methoxy-1,4-benzoquinol (DMQH2). This chain is Ubiquinone/menaquinone biosynthesis C-methyltransferase UbiE, found in Francisella philomiragia subsp. philomiragia (strain ATCC 25017 / CCUG 19701 / FSC 153 / O#319-036).